The following is a 262-amino-acid chain: Glutamate 5-kinase (262 aa).

Lys-14 provides a ligand contact to ATP. Substrate is bound by residues Ser-54, Asp-141, and Asn-153. ATP contacts are provided by residues Ser-173–Asp-174 and Thr-214–Lys-220.

The protein belongs to the glutamate 5-kinase family.

It is found in the cytoplasm. It carries out the reaction L-glutamate + ATP = L-glutamyl 5-phosphate + ADP. The protein operates within amino-acid biosynthesis; L-proline biosynthesis; L-glutamate 5-semialdehyde from L-glutamate: step 1/2. Catalyzes the transfer of a phosphate group to glutamate to form L-glutamate 5-phosphate. In Symbiobacterium thermophilum (strain DSM 24528 / JCM 14929 / IAM 14863 / T), this protein is Glutamate 5-kinase.